The primary structure comprises 170 residues: Large ribosomal subunit protein bL17 (170 aa).

It belongs to the bacterial ribosomal protein bL17 family. In terms of assembly, part of the 50S ribosomal subunit. Contacts protein L32.

The chain is Large ribosomal subunit protein bL17 from Azobacteroides pseudotrichonymphae genomovar. CFP2.